The following is a 480-amino-acid chain: Pyruvate kinase II (480 aa).

Position 36 (arginine 36) interacts with substrate. Asparagine 38, serine 40, and aspartate 70 together coordinate K(+). 38–41 (NFSH) contributes to the ATP binding site. Residues arginine 77 and lysine 160 each coordinate ATP. Lysine 223 lines the substrate pocket. Glutamate 225 is a binding site for Mg(2+). Substrate is bound by residues glycine 251, aspartate 252, and threonine 284. Aspartate 252 is a Mg(2+) binding site.

This sequence belongs to the pyruvate kinase family. Homotetramer. The cofactor is Mg(2+). It depends on K(+) as a cofactor.

The enzyme catalyses pyruvate + ATP = phosphoenolpyruvate + ADP + H(+). It participates in carbohydrate degradation; glycolysis; pyruvate from D-glyceraldehyde 3-phosphate: step 5/5. Its activity is regulated as follows. Allosterically activated by AMP and by several sugar phosphates. Belongs to type II PK. Functionally, catalyzes the formation of pyruvate in the last step of glycolysis, it is irreversible under physiological conditions. The reaction is critical for the control of metabolic flux in the second part of glycolysis. The polypeptide is Pyruvate kinase II (pykA) (Salmonella typhimurium (strain LT2 / SGSC1412 / ATCC 700720)).